We begin with the raw amino-acid sequence, 329 residues long: Ribosomal RNA small subunit methyltransferase C (329 aa).

Belongs to the methyltransferase superfamily. RsmC family. As to quaternary structure, monomer.

The protein localises to the cytoplasm. It catalyses the reaction guanosine(1207) in 16S rRNA + S-adenosyl-L-methionine = N(2)-methylguanosine(1207) in 16S rRNA + S-adenosyl-L-homocysteine + H(+). Functionally, specifically methylates the guanine in position 1207 of 16S rRNA in the 30S particle. The protein is Ribosomal RNA small subunit methyltransferase C of Actinobacillus pleuropneumoniae serotype 7 (strain AP76).